The following is a 599-amino-acid chain: Elongation factor 4 (599 aa).

Residues S5–V187 form the tr-type G domain. GTP is bound by residues D17–T22 and N134–D137.

It belongs to the TRAFAC class translation factor GTPase superfamily. Classic translation factor GTPase family. LepA subfamily.

The protein localises to the cell inner membrane. It catalyses the reaction GTP + H2O = GDP + phosphate + H(+). Functionally, required for accurate and efficient protein synthesis under certain stress conditions. May act as a fidelity factor of the translation reaction, by catalyzing a one-codon backward translocation of tRNAs on improperly translocated ribosomes. Back-translocation proceeds from a post-translocation (POST) complex to a pre-translocation (PRE) complex, thus giving elongation factor G a second chance to translocate the tRNAs correctly. Binds to ribosomes in a GTP-dependent manner. The polypeptide is Elongation factor 4 (Saccharophagus degradans (strain 2-40 / ATCC 43961 / DSM 17024)).